We begin with the raw amino-acid sequence, 562 residues long: mRNA cleavage and polyadenylation factor CLP1 (562 aa).

The disordered stretch occupies residues 1 to 27; sequence MSLPGLELSQQPIEARRAPPQPTQISL. Residues Glu32, Lys71, and 154 to 159 contribute to the ATP site; that span reads DAGKTS. A disordered region spans residues 415-483; sequence EDEYDPSKFD…STTPFTNLPS (69 aa). The span at 445–479 shows a compositional bias: low complexity; sequence SLQPPSGLLPGLRSELPSATTGFPSASTSSTTPFT.

The protein belongs to the Clp1 family. Clp1 subfamily. As to quaternary structure, component of a pre-mRNA cleavage factor complex. Interacts directly with PCF11.

It is found in the nucleus. Its function is as follows. Required for endonucleolytic cleavage during polyadenylation-dependent pre-mRNA 3'-end formation. The protein is mRNA cleavage and polyadenylation factor CLP1 of Coccidioides immitis (strain RS) (Valley fever fungus).